We begin with the raw amino-acid sequence, 299 residues long: ATP phosphoribosyltransferase (299 aa).

This sequence belongs to the ATP phosphoribosyltransferase family. Long subfamily. Requires Mg(2+) as cofactor.

It is found in the cytoplasm. The catalysed reaction is 1-(5-phospho-beta-D-ribosyl)-ATP + diphosphate = 5-phospho-alpha-D-ribose 1-diphosphate + ATP. The protein operates within amino-acid biosynthesis; L-histidine biosynthesis; L-histidine from 5-phospho-alpha-D-ribose 1-diphosphate: step 1/9. Feedback inhibited by histidine. Catalyzes the condensation of ATP and 5-phosphoribose 1-diphosphate to form N'-(5'-phosphoribosyl)-ATP (PR-ATP). Has a crucial role in the pathway because the rate of histidine biosynthesis seems to be controlled primarily by regulation of HisG enzymatic activity. The chain is ATP phosphoribosyltransferase from Shewanella piezotolerans (strain WP3 / JCM 13877).